Here is a 276-residue protein sequence, read N- to C-terminus: Undecaprenyl-diphosphatase (276 aa).

The next 8 membrane-spanning stretches (helical) occupy residues I6–I26, E49–N69, F89–F109, L117–I137, L151–I171, I181–L201, A224–I244, and F256–I276.

It belongs to the UppP family.

The protein localises to the cell membrane. It catalyses the reaction di-trans,octa-cis-undecaprenyl diphosphate + H2O = di-trans,octa-cis-undecaprenyl phosphate + phosphate + H(+). Catalyzes the dephosphorylation of undecaprenyl diphosphate (UPP). Confers resistance to bacitracin. The polypeptide is Undecaprenyl-diphosphatase (Enterococcus faecalis (Streptococcus faecalis)).